We begin with the raw amino-acid sequence, 246 residues long: Acetoacetate decarboxylase (246 aa).

The active-site Schiff-base intermediate with acetoacetate is Lys116.

It belongs to the ADC family.

It carries out the reaction acetoacetate + H(+) = acetone + CO2. Catalyzes the conversion of acetoacetate to acetone and carbon dioxide. This Bordetella avium (strain 197N) protein is Acetoacetate decarboxylase.